The sequence spans 568 residues: bZIP transcription factor 60 (568 aa).

Composition is skewed to low complexity over residues 1–13 and 60–78; these read MAEP…FADL and TTSS…TSSA. Disordered regions lie at residues 1-29 and 45-134; these read MAEP…TLGD and DFDV…RKKQ. Residues 1–240 are Cytoplasmic-facing; sequence MAEPDLLAPF…PAKKARKTKK (240 aa). A compositionally biased stretch (basic and acidic residues) spans 103-113; it reads GGKDGKDDEAK. One can recognise a bZIP domain in the interval 111–171; the sequence is EAKRRARLVR…AENAALKQQL (61 aa). Residues 113–144 form a basic motif region; sequence KRRARLVRNRESAHQSRQRKKQYVEELEGKVK. Positions 150–157 are leucine-zipper; it reads IADLTARI. A helical transmembrane segment spans residues 241-261; it reads VAGVSLLGLLFLMMVCGCLVP. The Lumenal segment spans residues 262–568; sequence AVNRMYGAAY…LPFKSHSPHL (307 aa). Asn307, Asn452, Asn456, Asn488, and Asn499 each carry an N-linked (GlcNAc...) asparagine glycan. The tract at residues 479-510 is disordered; the sequence is AIPLRGSTSNDTDHFKAPPKNHSQSHAGRKPV.

Belongs to the bZIP family.

It is found in the endoplasmic reticulum membrane. Its subcellular location is the nucleus. In terms of biological role, transcription factor involved in endoplasmic reticulum (ER) stress response. Acts as a ER stress sensor and activates the transcription factor BZIP50 and the chaperone BIP1. This chain is bZIP transcription factor 60, found in Oryza sativa subsp. japonica (Rice).